Here is a 201-residue protein sequence, read N- to C-terminus: 3-isopropylmalate dehydratase small subunit (201 aa).

It belongs to the LeuD family. LeuD type 1 subfamily. As to quaternary structure, heterodimer of LeuC and LeuD.

It catalyses the reaction (2R,3S)-3-isopropylmalate = (2S)-2-isopropylmalate. It participates in amino-acid biosynthesis; L-leucine biosynthesis; L-leucine from 3-methyl-2-oxobutanoate: step 2/4. Functionally, catalyzes the isomerization between 2-isopropylmalate and 3-isopropylmalate, via the formation of 2-isopropylmaleate. The chain is 3-isopropylmalate dehydratase small subunit from Shewanella denitrificans (strain OS217 / ATCC BAA-1090 / DSM 15013).